Reading from the N-terminus, the 467-residue chain is MSDNIGKVVQVMGPVVDVEFEPGKLPAILTALLITNTVINDEADNLVVEVAQHLGDNVVRTIAMDVTDGLVRGMPVKDTGAPITMPVGAASLGRVLNVVGKPVDGLGPVSREKTMPIHRPAPLFTEQDTSVNVLETGIKVIDLLVPFPRGGKMGLFGGAGVGKTVIMMEMVNNIAMQHGGISVFAGVGERTREGNDLYHEMKDSGVLPKAALIYGQMTEPPGARARVALSALTCAEYFRDVEGQDVLIFIDNIFRFTQAGAEVSALLGRIPSAVGYQPTLAVDLGGLQERITSTDKGSITAVQCVYVPADDLTDPAPATTFAHLDGTVVLSRQIAELGIYPSVDPLDSTSRILDAAYIGEEHYRVAREVQQTLQKYKELQDIIAILGMDELSDEDKVTVERARKLQRFLSQPFHVAEVFTGKPGSYVKIEDTVRSFKEICDGKHDDLPESAFYMVGSIEEAVAKAKG.

157–164 (GGAGVGKT) serves as a coordination point for ATP.

It belongs to the ATPase alpha/beta chains family. In terms of assembly, F-type ATPases have 2 components, CF(1) - the catalytic core - and CF(0) - the membrane proton channel. CF(1) has five subunits: alpha(3), beta(3), gamma(1), delta(1), epsilon(1). CF(0) has three main subunits: a(1), b(2) and c(9-12). The alpha and beta chains form an alternating ring which encloses part of the gamma chain. CF(1) is attached to CF(0) by a central stalk formed by the gamma and epsilon chains, while a peripheral stalk is formed by the delta and b chains.

The protein localises to the cell inner membrane. The catalysed reaction is ATP + H2O + 4 H(+)(in) = ADP + phosphate + 5 H(+)(out). Its function is as follows. Produces ATP from ADP in the presence of a proton gradient across the membrane. The catalytic sites are hosted primarily by the beta subunits. In Desulfosudis oleivorans (strain DSM 6200 / JCM 39069 / Hxd3) (Desulfococcus oleovorans), this protein is ATP synthase subunit beta.